Consider the following 446-residue polypeptide: Chromosomal replication initiator protein DnaA (446 aa).

Residues 1-81 (MENISDLWNS…AKLAIRFIIP (81 aa)) are domain I, interacts with DnaA modulators. The tract at residues 81–109 (PQSQAEEDIDLPPVKRNPAQDDSAHLPQS) is domain II. A domain III, AAA+ region region spans residues 110–326 (MLNPKYTFDT…GALIRVVAYS (217 aa)). Positions 154, 156, 157, and 158 each coordinate ATP. The interval 327-446 (SLINKDINAD…QVEEINGILK (120 aa)) is domain IV, binds dsDNA.

Belongs to the DnaA family. As to quaternary structure, oligomerizes as a right-handed, spiral filament on DNA at oriC.

It localises to the cytoplasm. Functionally, plays an essential role in the initiation and regulation of chromosomal replication. ATP-DnaA binds to the origin of replication (oriC) to initiate formation of the DNA replication initiation complex once per cell cycle. Binds the DnaA box (a 9 base pair repeat at the origin) and separates the double-stranded (ds)DNA. Forms a right-handed helical filament on oriC DNA; dsDNA binds to the exterior of the filament while single-stranded (ss)DNA is stabiized in the filament's interior. The ATP-DnaA-oriC complex binds and stabilizes one strand of the AT-rich DNA unwinding element (DUE), permitting loading of DNA polymerase. After initiation quickly degrades to an ADP-DnaA complex that is not apt for DNA replication. Binds acidic phospholipids. This Bacillus cereus (strain G9842) protein is Chromosomal replication initiator protein DnaA.